The chain runs to 87 residues: MANIKSAKKRAIQSEKARKIIASRRSMMRTFIKKVYAAIEAGDKAAAQKAFNEMQPIVDRQAAKGLIHKNKAARHKANLTAQINKLA.

It belongs to the bacterial ribosomal protein bS20 family.

Functionally, binds directly to 16S ribosomal RNA. This chain is Small ribosomal subunit protein bS20, found in Shigella flexneri serotype 5b (strain 8401).